Here is a 150-residue protein sequence, read N- to C-terminus: Ribosome maturation factor RimP (150 aa).

The protein belongs to the RimP family.

The protein localises to the cytoplasm. Its function is as follows. Required for maturation of 30S ribosomal subunits. The protein is Ribosome maturation factor RimP of Thermotoga neapolitana (strain ATCC 49049 / DSM 4359 / NBRC 107923 / NS-E).